Here is a 649-residue protein sequence, read N- to C-terminus: Solute carrier family 22 member 16 (649 aa).

Residues 19-39 form a helical membrane-spanning segment; sequence FQIVLYLICAYQSLSCGIHYL. Residues asparagine 65 and asparagine 108 are each glycosylated (N-linked (GlcNAc...) asparagine). 5 helical membrane-spanning segments follow: residues 156-176, 190-210, 214-234, 244-264, and 268-288; these read MIQP…SYLS, IGVF…SFMI, FLVM…MEII, IHLN…SYLL, and WLYQ…CWML. N-linked (GlcNAc...) asparagine glycosylation occurs at asparagine 315. 6 consecutive transmembrane segments (helical) span residues 356–376, 389–409, 417–437, 445–465, 475–495, and 501–521; these read AKMT…YYMF, LYLL…CIWL, TMLL…VMPS, MVAL…YLYT, CLAV…IPFT, and VWIF…GLLS. Positions 530 to 544 are enriched in polar residues; the sequence is TPMKSTWETTEQQVP. 2 disordered regions span residues 530–560 and 579–649; these read TPMK…SFER and SPDA…LGGF.

The protein belongs to the major facilitator (TC 2.A.1) superfamily. Organic cation transporter (TC 2.A.1.19) family.

It is found in the cell membrane. It carries out the reaction (R)-carnitine(in) = (R)-carnitine(out). It catalyses the reaction spermidine(in) = spermidine(out). Its function is as follows. Facilitative organic cation transporter that mediates the transport of carnitine as well as the polyamine spermidine. Mediates the partially Na(+)-dependent bidirectional transport of carnitine. May mediate L-carnitine secretion from testis epididymal epithelium into the lumen which is involved in the maturation of spermatozoa. The polypeptide is Solute carrier family 22 member 16 (Mus musculus (Mouse)).